The chain runs to 430 residues: Histidine--tRNA ligase (430 aa).

Belongs to the class-II aminoacyl-tRNA synthetase family. Homodimer.

The protein resides in the cytoplasm. It carries out the reaction tRNA(His) + L-histidine + ATP = L-histidyl-tRNA(His) + AMP + diphosphate + H(+). In Gloeothece citriformis (strain PCC 7424) (Cyanothece sp. (strain PCC 7424)), this protein is Histidine--tRNA ligase.